We begin with the raw amino-acid sequence, 374 residues long: Homeobox protein knotted-1-like 13 (374 aa).

The tract at residues 214 to 242 (TGASPGEGTGATMSDGEDDQADSEANMYD) is disordered. The 21-residue stretch at 270–290 (ELKHELKQGYKEKLIDIREEI) folds into the ELK domain. The segment at residues 291 to 354 (LRKRRAGKLP…NQRKRNWHSN (64 aa)) is a DNA-binding region (homeobox; TALE-type). The tract at residues 347-374 (RKRNWHSNPSSSTSVKTKRKSNAGDNNS) is disordered.

This sequence belongs to the TALE/KNOX homeobox family. Isoforms 1 and 2 are expressed in roots, stems, shoot meristem, leaf blades, leaf sheaths and flowers. Isoform 3 is expressed in stems, shoot meristem, rachis, leaf blades and leaf sheaths.

Its subcellular location is the nucleus. In terms of biological role, isoform 3 acts as a transcription activator, but isoforms 1 and 2 do not. This is Homeobox protein knotted-1-like 13 (OSH45) from Oryza sativa subsp. japonica (Rice).